The following is a 538-amino-acid chain: Sterile alpha motif domain-containing protein 1 (538 aa).

A compositionally biased stretch (pro residues) spans 1 to 11 (MAGPPALPPPE). Disordered regions lie at residues 1 to 30 (MAGP…ASPH) and 92 to 247 (SYRN…GAAR). The segment covering 12 to 29 (TAAAATTAAAASSSAASP) has biased composition (low complexity). Residues 23 to 99 (SSSAASPHYQ…SISYRNAARV (77 aa)) form the SAMD1-like winged helix (WH) domain. Thr107 carries the post-translational modification Phosphothreonine. The segment covering 115-125 (PRGAPAAAAAA) has biased composition (low complexity). Positions 126–139 (APPPTPAPPPPPAP) are enriched in pro residues. Low complexity predominate over residues 140–158 (VAAAAPARAPRAAAAAATA). The residue at position 161 (Ser161) is a Phosphoserine. Residues 168–177 (GPRAQRAAPL) show a composition bias toward low complexity. Residues 178 to 236 (AAPPPAPAAPPAVAPPAGPRRAPPPAVAAREPPLPPPPQPPAPPQQQQPPPPQPQPPPE) are compositionally biased toward pro residues. Over residues 237-247 (GGAVRAGGAAR) the composition is skewed to low complexity. Position 261 is a phosphoserine (Ser261). The segment covering 282–291 (AARGRLERTR) has biased composition (basic and acidic residues). Positions 282 to 458 (AARGRLERTR…PPGRKEKPSD (177 aa)) are disordered. The span at 328-351 (KEEEEDDDEDEDEEDDVSEGSEVP) shows a compositional bias: acidic residues. Over residues 425–436 (SPSPVPLPPGKP) the composition is skewed to pro residues. The region spanning 462–530 (WTVMDVVEYF…KVLQQGHFED (69 aa)) is the SAM domain.

Homopolymerize into a closed pentameric ring. Interacts (via SAM domain) with L3MBTL3 (via SAM domain); the interaction mediates L3MBTL3 binding to chromatin. Interacts (via WH domain) with KDM1A; the interaction modulates KDM1A function. As to expression, expressed in atherosclerotic lesions, not in normal intima. Expressed in foam cells.

The protein localises to the nucleus. Its subcellular location is the chromosome. It localises to the secreted. In terms of biological role, unmethylated CpG islands (CGIs)-binding protein which localizes to H3K4me3-decorated CGIs, where it acts as a transcriptional repressor. Tethers L3MBTL3 to chromatin and interacts with the KDM1A histone demethylase complex to modulate H3K4me2 and H3K4me3 levels at CGIs. Plays a role in atherogenesis by binding with LDL on cell surface and promoting LDL oxidation which leads to the formation of foam cell. This Homo sapiens (Human) protein is Sterile alpha motif domain-containing protein 1.